We begin with the raw amino-acid sequence, 173 residues long: Probable glutathione peroxidase 5 (173 aa).

Gly-2 carries the N-myristoyl glycine lipid modification. Cys-46 is an active-site residue.

The protein belongs to the glutathione peroxidase family. As to expression, ubiquitous.

Its subcellular location is the cell membrane. The catalysed reaction is 2 glutathione + H2O2 = glutathione disulfide + 2 H2O. In terms of biological role, may constitute a glutathione peroxidase-like protective system against oxidative stresses. This chain is Probable glutathione peroxidase 5 (GPX5), found in Arabidopsis thaliana (Mouse-ear cress).